Here is a 414-residue protein sequence, read N- to C-terminus: Putative F-box/kelch-repeat protein At1g20940 (414 aa).

Residues 13 to 65 enclose the F-box domain; sequence SSIINDLPLDLLDEILFRLEPKSMAMMRCTNNSIKSYLSDPRFGPEYPSWVRP. Kelch repeat units follow at residues 281-328 and 331-378; these read LTLI…MYDG and LVVR…KLTP.

In terms of assembly, interacts with DEK3.

It functions in the pathway protein modification; protein ubiquitination. Probable component of an E3 ubiquitin ligase complex. In Arabidopsis thaliana (Mouse-ear cress), this protein is Putative F-box/kelch-repeat protein At1g20940.